The following is a 555-amino-acid chain: Small ribosomal subunit protein uS3m (555 aa).

Residues 1–20 (MARKGNPISVRLGKNRSSDS) are disordered.

It belongs to the universal ribosomal protein uS3 family.

The protein resides in the mitochondrion. This is Small ribosomal subunit protein uS3m (RPS3) from Brassica napus (Rape).